Reading from the N-terminus, the 377-residue chain is RIB43A-like with coiled-coils protein 2 (377 aa).

Residues 188-238 (ELKFDEAARDLQRLEITTRKAVCAAVKEFNKKQVVELAERKRQVKQQEQED) are a coiled coil. The tract at residues 355-377 (QLDAAPSSQPTEDYFSQFNTRSR) is disordered. Polar residues predominate over residues 360–377 (PSSQPTEDYFSQFNTRSR).

This sequence belongs to the RIB43A family. In terms of assembly, microtubule inner protein component of sperm flagellar doublet microtubules.

It is found in the cytoplasm. The protein localises to the cytoskeleton. It localises to the cilium axoneme. The protein resides in the flagellum axoneme. Functionally, microtubule inner protein (MIP) part of the dynein-decorated doublet microtubules (DMTs) in cilia axoneme, which is required for motile cilia beating. The protein is RIB43A-like with coiled-coils protein 2 of Rattus norvegicus (Rat).